We begin with the raw amino-acid sequence, 923 residues long: DNA mismatch repair protein MutS (923 aa).

671–678 (GPNMAGKS) contributes to the ATP binding site.

Belongs to the DNA mismatch repair MutS family.

This protein is involved in the repair of mismatches in DNA. It is possible that it carries out the mismatch recognition step. This protein has a weak ATPase activity. The chain is DNA mismatch repair protein MutS from Rhodopseudomonas palustris (strain BisB5).